Here is a 166-residue protein sequence, read N- to C-terminus: Small ribosomal subunit protein uS5 (166 aa).

The 64-residue stretch at 12 to 75 folds into the S5 DRBM domain; the sequence is YIEKLVQVNR…EAARRNMIQV (64 aa).

It belongs to the universal ribosomal protein uS5 family. Part of the 30S ribosomal subunit. Contacts proteins S4 and S8.

Functionally, with S4 and S12 plays an important role in translational accuracy. In terms of biological role, located at the back of the 30S subunit body where it stabilizes the conformation of the head with respect to the body. The chain is Small ribosomal subunit protein uS5 from Pseudomonas fluorescens (strain ATCC BAA-477 / NRRL B-23932 / Pf-5).